A 463-amino-acid polypeptide reads, in one-letter code: DDB1- and CUL4-associated factor 12-like protein 1 (463 aa).

The disordered stretch occupies residues 1–35 (MAQQQTGSRKRKAPAVEADAESSPSQGLAAADGEG). WD repeat units follow at residues 87-137 (LTER…PLLR), 138-184 (DSEA…SLDP), 185-252 (LCLG…DVEA), 253-297 (IPRA…ALSR), 298-341 (LLSI…QQNI), and 342-376 (RPLC…LFYD).

The protein belongs to the WD repeat DCAF12 family.

The sequence is that of DDB1- and CUL4-associated factor 12-like protein 1 (DCAF12L1) from Homo sapiens (Human).